A 274-amino-acid polypeptide reads, in one-letter code: tRNA pseudouridine synthase A (274 aa).

The active-site Nucleophile is Asp57. Tyr115 serves as a coordination point for substrate.

This sequence belongs to the tRNA pseudouridine synthase TruA family. Homodimer.

The catalysed reaction is uridine(38/39/40) in tRNA = pseudouridine(38/39/40) in tRNA. Its function is as follows. Formation of pseudouridine at positions 38, 39 and 40 in the anticodon stem and loop of transfer RNAs. The protein is tRNA pseudouridine synthase A of Frankia casuarinae (strain DSM 45818 / CECT 9043 / HFP020203 / CcI3).